We begin with the raw amino-acid sequence, 153 residues long: Inner membrane protein YjiG (153 aa).

Over 1 to 31 (MTTQVRKNVMDMFIDGARRGFTIATTNLLPN) the chain is Periplasmic. The helical transmembrane segment at 32–52 (VVMAFVIIQALKITGLLDWVG) threads the bilayer. At 53–68 (HICEPVMALWGLPGEA) the chain is on the cytoplasmic side. 2 helical membrane passes run 69–89 (ATVLLAALMSMGGAVGVAASL) and 90–110 (ATAGALTGHDVTVLLPAMYLM). The Cytoplasmic portion of the chain corresponds to 111 to 132 (GNPVQNVGRCLGTAEVNAKYYP). Residues 133 to 153 (HIITVCVINALLSIWVMQLIV) traverse the membrane as a helical segment.

This sequence belongs to the SpmB family.

The protein resides in the cell inner membrane. This chain is Inner membrane protein YjiG (yjiG), found in Escherichia coli O157:H7.